Reading from the N-terminus, the 1464-residue chain is DNA-directed RNA polymerase subunit beta' (1464 aa).

The Zn(2+) site is built by C66, C68, C96, and C99. 3 residues coordinate Mg(2+): D491, D493, and D495. Zn(2+) is bound by residues C838, C912, C919, and C922. A compositionally biased stretch (acidic residues) spans N1143–D1200. Residues N1143–D1229 are disordered. Low complexity predominate over residues H1204–N1219. Positions Y1220–D1229 are enriched in acidic residues.

Belongs to the RNA polymerase beta' chain family. As to quaternary structure, the RNAP catalytic core consists of 2 alpha, 1 beta, 1 beta' and 1 omega subunit. When a sigma factor is associated with the core the holoenzyme is formed, which can initiate transcription. It depends on Mg(2+) as a cofactor. The cofactor is Zn(2+).

The enzyme catalyses RNA(n) + a ribonucleoside 5'-triphosphate = RNA(n+1) + diphosphate. DNA-dependent RNA polymerase catalyzes the transcription of DNA into RNA using the four ribonucleoside triphosphates as substrates. This chain is DNA-directed RNA polymerase subunit beta', found in Karelsulcia muelleri (strain GWSS) (Sulcia muelleri).